Reading from the N-terminus, the 168-residue chain is MTDETAANGENEAGRQSQSSSLPLVVNAQYVKDFSFENPNAPQSLMADQGQPKIDLQVDVQARGLNDTVSEVVLSMRAEATRNDRTAFIVELSYAGIFTLPAQIQPEQARAILLIEAPRLLFPFARQIVAEATQNGGYPPLMLQPLDFVDLYRRQVLNRGSNGEVGHA.

The segment at 1-20 (MTDETAANGENEAGRQSQSS) is disordered.

The protein belongs to the SecB family. Homotetramer, a dimer of dimers. One homotetramer interacts with 1 SecA dimer.

It is found in the cytoplasm. Its function is as follows. One of the proteins required for the normal export of preproteins out of the cell cytoplasm. It is a molecular chaperone that binds to a subset of precursor proteins, maintaining them in a translocation-competent state. It also specifically binds to its receptor SecA. This Rhodospirillum centenum (strain ATCC 51521 / SW) protein is Protein-export protein SecB.